Reading from the N-terminus, the 37-residue chain is Esculentin-2P (37 aa).

A disulfide bond links C31 and C37.

In terms of tissue distribution, expressed by the skin glands.

It localises to the secreted. Its function is as follows. Antibacterial activity against Gram-negative bacterium E.coli. This Lithobates pipiens (Northern leopard frog) protein is Esculentin-2P.